A 198-amino-acid chain; its full sequence is IMP cyclohydrolase (198 aa).

It belongs to the archaeal IMP cyclohydrolase family.

The enzyme catalyses IMP + H2O = 5-formamido-1-(5-phospho-D-ribosyl)imidazole-4-carboxamide. Its pathway is purine metabolism; IMP biosynthesis via de novo pathway; IMP from 5-formamido-1-(5-phospho-D-ribosyl)imidazole-4-carboxamide: step 1/1. Functionally, catalyzes the cyclization of 5-formylamidoimidazole-4-carboxamide ribonucleotide to IMP. This Thermococcus kodakarensis (strain ATCC BAA-918 / JCM 12380 / KOD1) (Pyrococcus kodakaraensis (strain KOD1)) protein is IMP cyclohydrolase.